A 501-amino-acid polypeptide reads, in one-letter code: Endosomal/lysosomal proton channel TMEM175 (501 aa).

Residues 1–20 form a disordered region; the sequence is MAAPRAATPGPGGGARKPEL. The Cytoplasmic portion of the chain corresponds to 1-31; it reads MAAPRAATPGPGGGARKPELDLELGSSTQTS. Residues 32–54 traverse the membrane as a helical segment; the sequence is HRLLAYSDALLSIIATVMILPVA. The RxxxFSD motif 1 signature appears at 33 to 39; sequence RLLAYSD. Residues 55-75 are Lumenal-facing; that stretch reads HTKIHPDQKLGESVQQLLLTK. A short helix H1-1 region spans residues 56–61; the sequence is TKIHPD. Residues 63–69 are short helix H2-1; the sequence is KLGESVQ. The helical transmembrane segment at 76-98 threads the bilayer; sequence IAVYLMTFLIVTVAWAAHVRLFQ. Over 99–104 the chain is Cytoplasmic; sequence VIELID. The chain crosses the membrane as a helical span at residues 105–126; the sequence is DVLALLNLACMMIITFLPYTFS. The Lumenal portion of the chain corresponds to 127-136; it reads LMASFPGVPF. Residues 137–158 form a helical membrane-spanning segment; the sequence is GIFLFSVCAVVIGLIQAVIVVY. Over 159–182 the chain is Cytoplasmic; the sequence is GFYHPHLLNQQIQVSENQNFYKRH. The helical transmembrane segment at 183-203 threads the bilayer; sequence ILKIILRGPALCFLAAIFSFF. Residues 204 to 208 lie on the Lumenal side of the membrane; that stretch reads FIPLS. The helical transmembrane segment at 209 to 228 threads the bilayer; the sequence is YLLLGLVIVFPHLSRFITWC. Over 229 to 257 the chain is Cytoplasmic; the sequence is KTKIVGHRDEEEASYSLETFSFYLSEPLS. Residues 258 to 282 form a helical membrane-spanning segment; it reads KERVEAFSDGVYAIVATLLILDICE. The short motif at 260–266 is the RxxxFSD motif 2 element; sequence RVEAFSD. Over 283 to 309 the chain is Lumenal; it reads DNVPDPREVGEKFHGSLLEALSEYGPN. The interval 288–296 is short helix H1-2; the sequence is PREVGEKFH. Residues 298-304 are short helix H2-2; the sequence is SLLEALS. The helical transmembrane segment at 310–332 threads the bilayer; that stretch reads YLAYFGSFVTIGLLWFVHHSLFL. Residues 333–338 lie on the Cytoplasmic side of the membrane; it reads YVTKAT. A helical membrane pass occupies residues 339 to 360; it reads RLMGLLNILSLAFIGGLPLAYQ. The Lumenal portion of the chain corresponds to 361 to 375; that stretch reads LTSEFAEKSHNEIEA. Residues 376–396 form a helical membrane-spanning segment; sequence IQVSCVITFFASIFQFAIWTT. Over 397 to 416 the chain is Cytoplasmic; it reads ALLHERETLHPFARYGGKEH. A helical membrane pass occupies residues 417–440; the sequence is AFMFAKLALYPCVSLGAFFLTCLL. At 441 to 442 the chain is on the lumenal side; it reads SE. Residues 443 to 469 form a helical membrane-spanning segment; that stretch reads FSTEIFHLMQIVIPFAFLALRIFVRIS. Topologically, residues 470–501 are cytoplasmic; that stretch reads LTVIKSVMSLSRRKVVLLEEEEACLSPTETHS.

The protein belongs to the TMEM175 family. In terms of assembly, homodimer.

It is found in the endosome membrane. The protein localises to the lysosome membrane. The enzyme catalyses H(+)(in) = H(+)(out). It carries out the reaction K(+)(in) = K(+)(out). With respect to regulation, active at low pH (under pH 4.6): proton channel activity is activated by luminal side protons. Polyunsaturated fatty acids, such as arachidonic acid, also activate the channel activity. Its function is as follows. Proton-activated proton channel that catalyzes proton efflux from endosomes and lysosomes to maintain a steady-state pH. Activated at low pH (under pH 4.6) by luminal side protons: selectively mediates lysosomal proton release from lysosomes, eliciting a proton leak that balances V-ATPase activity to maintain pH homeostasis. Regulation of lumenal pH stability is required for autophagosome-lysosome fusion. Also acts as a potassium channel at higher pH, regulating potassium conductance in endosomes and lysosomes. The chain is Endosomal/lysosomal proton channel TMEM175 from Gallus gallus (Chicken).